A 312-amino-acid polypeptide reads, in one-letter code: Apulose-4-phosphate transketolase subunit B (312 aa).

It belongs to the transketolase family. In terms of assembly, probable heterodimer composed of AptA and AptB. It depends on thiamine diphosphate as a cofactor.

It carries out the reaction apulose 4-phosphate + D-glyceraldehyde 3-phosphate = D-xylulose 5-phosphate + dihydroxyacetone phosphate. Its pathway is carbohydrate metabolism. Its function is as follows. Involved in catabolism of D-apiose. Catalyzes the transfer of the glycolaldehyde group from apulose-4-phosphate to D-glyceraldehyde 3-phosphate, generating dihydroxyacetone phosphate and D-xylulose-5-phosphate. The protein is Apulose-4-phosphate transketolase subunit B of Phocaeicola vulgatus (strain ATCC 8482 / DSM 1447 / JCM 5826 / CCUG 4940 / NBRC 14291 / NCTC 11154) (Bacteroides vulgatus).